A 132-amino-acid chain; its full sequence is Small ribosomal subunit protein uS8c (132 aa).

Belongs to the universal ribosomal protein uS8 family. Part of the 30S ribosomal subunit.

It is found in the plastid. Its subcellular location is the chloroplast. Functionally, one of the primary rRNA binding proteins, it binds directly to 16S rRNA central domain where it helps coordinate assembly of the platform of the 30S subunit. The polypeptide is Small ribosomal subunit protein uS8c (rps8) (Marchantia polymorpha (Common liverwort)).